Here is a 201-residue protein sequence, read N- to C-terminus: Potassium-transporting ATPase KdpC subunit (201 aa).

A helical transmembrane segment spans residues 7–27 (PALVLLVALTAITGLAYPLAV).

The protein belongs to the KdpC family. In terms of assembly, the system is composed of three essential subunits: KdpA, KdpB and KdpC.

It localises to the cell inner membrane. In terms of biological role, part of the high-affinity ATP-driven potassium transport (or Kdp) system, which catalyzes the hydrolysis of ATP coupled with the electrogenic transport of potassium into the cytoplasm. This subunit acts as a catalytic chaperone that increases the ATP-binding affinity of the ATP-hydrolyzing subunit KdpB by the formation of a transient KdpB/KdpC/ATP ternary complex. This Methylorubrum extorquens (strain CM4 / NCIMB 13688) (Methylobacterium extorquens) protein is Potassium-transporting ATPase KdpC subunit.